The following is a 266-amino-acid chain: Small ribosomal subunit protein uS3 (266 aa).

One can recognise a KH type-2 domain in the interval 39–107 (VREYLKKKLK…PVHVNIEEIR (69 aa)). Positions 214–266 (PVVEEVTEDKRPRRNARPGDRRPRRDGEGGAPGARRGGPRRGAGKPEDGKTGE) are disordered. 2 stretches are compositionally biased toward basic and acidic residues: residues 230-241 (RPGDRRPRRDGE) and 257-266 (GKPEDGKTGE).

The protein belongs to the universal ribosomal protein uS3 family. In terms of assembly, part of the 30S ribosomal subunit. Forms a tight complex with proteins S10 and S14.

In terms of biological role, binds the lower part of the 30S subunit head. Binds mRNA in the 70S ribosome, positioning it for translation. The chain is Small ribosomal subunit protein uS3 from Burkholderia thailandensis (strain ATCC 700388 / DSM 13276 / CCUG 48851 / CIP 106301 / E264).